Here is a 314-residue protein sequence, read N- to C-terminus: Olfactory receptor 9Q2 (314 aa).

Over Met-1 to Val-25 the chain is Extracellular. The N-linked (GlcNAc...) asparagine glycan is linked to Asn-5. Residues Pro-26–Ile-46 form a helical membrane-spanning segment. At Leu-47–Arg-54 the chain is on the cytoplasmic side. Residues Leu-55 to Ser-75 traverse the membrane as a helical segment. The Extracellular segment spans residues Ala-76 to Ala-99. An intrachain disulfide couples Cys-97 to Cys-189. A helical transmembrane segment spans residues Gln-100–Tyr-120. Over Asp-121 to Lys-139 the chain is Cytoplasmic. The helical transmembrane segment at Ala-140–Thr-160 threads the bilayer. At Val-161–Val-197 the chain is on the extracellular side. The chain crosses the membrane as a helical span at residues Val-198 to Ser-217. The Cytoplasmic portion of the chain corresponds to Tyr-218–Thr-237. Residues Phe-238–Met-258 form a helical membrane-spanning segment. The Extracellular portion of the chain corresponds to Tyr-259–Asp-271. A helical transmembrane segment spans residues Arg-272–Leu-292. At Arg-293–Pro-314 the chain is on the cytoplasmic side.

Belongs to the G-protein coupled receptor 1 family.

It is found in the cell membrane. In terms of biological role, odorant receptor. This is Olfactory receptor 9Q2 (OR9Q2) from Homo sapiens (Human).